The primary structure comprises 440 residues: Rhamnogalacturonase A (440 aa).

An N-terminal signal peptide occupies residues 1 to 18; it reads MRALFLLALGSIPALVSG. A disulfide bridge links C39 with C65. An N-linked (GlcNAc...) asparagine glycan is attached at N50. The active-site Proton donor is the D215. C217 and C234 are disulfide-bonded. H290 is an active-site residue. N-linked (GlcNAc...) asparagine glycosylation occurs at N317. 2 disulfide bridges follow: C340–C346 and C368–C377. O-linked (Man) threonine glycosylation is present at T385. Residue S386 is glycosylated (O-linked (Man) serine). O-linked (Man) threonine glycans are attached at residues T388, T389, and T390. O-linked (Man) serine glycosylation is present at S391. O-linked (Man) threonine glycans are attached at residues T392 and T394. Residues S398 and S401 are each glycosylated (O-linked (Man) serine). 3 O-linked (Man) threonine glycosylation sites follow: T403, T404, and T416. An O-linked (Man) serine glycan is attached at S418. O-linked (Man) threonine glycans are attached at residues T423 and T426. O-linked (Man) serine glycosylation is found at S427 and S436.

It belongs to the glycosyl hydrolase 28 family. In terms of processing, the N-terminus is blocked. N-glycosylated and may also be O-glycosylated.

It localises to the secreted. The enzyme catalyses Endohydrolysis of alpha-D-GalA-(1-&gt;2)-alpha-L-Rha glycosidic bond in the rhamnogalacturonan I backbone with initial inversion of anomeric configuration releasing oligosaccharides with beta-D-GalA at the reducing end.. Pectinolytic enzymes consist of four classes of enzymes: pectine lyase, polygalacturonase, pectin methylesterase and rhamnogalacturonase. Has a positive effect in the apple hot-mash liquefaction process. Hydrolyzes alpha-D-galacturonopyranosyl-(1,2)-alpha-L-rhamnopyranosyl linkages in the backbone of the hairy regions of pectins. The chain is Rhamnogalacturonase A (rhgA) from Aspergillus aculeatus.